The sequence spans 354 residues: DNA integrity scanning protein DisA (354 aa).

The region spanning Gly6–Ser144 is the DAC domain. Residues Gly73, Leu91, and Thr104–Thr108 contribute to the ATP site.

This sequence belongs to the DisA family. Homooctamer. Mg(2+) is required as a cofactor.

It carries out the reaction 2 ATP = 3',3'-c-di-AMP + 2 diphosphate. Functionally, participates in a DNA-damage check-point that is active prior to asymmetric division when DNA is damaged. DisA forms globular foci that rapidly scan along the chromosomes during sporulation, searching for lesions. When a lesion is present, DisA pauses at the lesion site. This triggers a cellular response that culminates in a temporary block in sporulation initiation. Its function is as follows. Also has diadenylate cyclase activity, catalyzing the condensation of 2 ATP molecules into cyclic di-AMP (c-di-AMP). c-di-AMP acts as a signaling molecule that couples DNA integrity with progression of sporulation. The rise in c-di-AMP level generated by DisA while scanning the chromosome, operates as a positive signal that advances sporulation; upon encountering a lesion, the DisA focus arrests at the damaged site and halts c-di-AMP synthesis. The sequence is that of DNA integrity scanning protein DisA from Clostridium botulinum (strain Alaska E43 / Type E3).